Consider the following 613-residue polypeptide: Dihydroxy-acid dehydratase (613 aa).

D81 serves as a coordination point for Mg(2+). Residue C122 coordinates [2Fe-2S] cluster. The Mg(2+) site is built by D123 and K124. At K124 the chain carries N6-carboxylysine. [2Fe-2S] cluster is bound at residue C195. E491 is a Mg(2+) binding site. S517 serves as the catalytic Proton acceptor.

It belongs to the IlvD/Edd family. Homodimer. It depends on [2Fe-2S] cluster as a cofactor. Mg(2+) serves as cofactor.

The catalysed reaction is (2R)-2,3-dihydroxy-3-methylbutanoate = 3-methyl-2-oxobutanoate + H2O. The enzyme catalyses (2R,3R)-2,3-dihydroxy-3-methylpentanoate = (S)-3-methyl-2-oxopentanoate + H2O. Its pathway is amino-acid biosynthesis; L-isoleucine biosynthesis; L-isoleucine from 2-oxobutanoate: step 3/4. It participates in amino-acid biosynthesis; L-valine biosynthesis; L-valine from pyruvate: step 3/4. Its function is as follows. Functions in the biosynthesis of branched-chain amino acids. Catalyzes the dehydration of (2R,3R)-2,3-dihydroxy-3-methylpentanoate (2,3-dihydroxy-3-methylvalerate) into 2-oxo-3-methylpentanoate (2-oxo-3-methylvalerate) and of (2R)-2,3-dihydroxy-3-methylbutanoate (2,3-dihydroxyisovalerate) into 2-oxo-3-methylbutanoate (2-oxoisovalerate), the penultimate precursor to L-isoleucine and L-valine, respectively. The protein is Dihydroxy-acid dehydratase of Buchnera aphidicola subsp. Melaphis rhois.